The following is a 203-amino-acid chain: Small ribosomal subunit protein uS4 (203 aa).

The region spanning 93–156 is the S4 RNA-binding domain; the sequence is RRLDNVVYRL…LKVPAILEAV (64 aa).

This sequence belongs to the universal ribosomal protein uS4 family. Part of the 30S ribosomal subunit. Contacts protein S5. The interaction surface between S4 and S5 is involved in control of translational fidelity.

One of the primary rRNA binding proteins, it binds directly to 16S rRNA where it nucleates assembly of the body of the 30S subunit. Its function is as follows. With S5 and S12 plays an important role in translational accuracy. The polypeptide is Small ribosomal subunit protein uS4 (Streptococcus pneumoniae serotype 2 (strain D39 / NCTC 7466)).